The following is a 481-amino-acid chain: F-box protein At1g49360 (481 aa).

Residues 105–156 (LKEDLFLPSDLVRLILSRLSFKDNIRSSTVCKAWGDIAASVRVKSRRCWLLY) form the F-box domain.

The protein is F-box protein At1g49360 of Arabidopsis thaliana (Mouse-ear cress).